A 180-amino-acid chain; its full sequence is YY1-associated factor 2 (180 aa).

Disordered stretches follow at residues 1–24, 47–120, and 132–180; these read MGDK…GYWD, GTST…EVTV, and EKTK…GESH. The segment at 19-48 adopts a RanBP2-type zinc-finger fold; the sequence is DEGYWDCSVCTFRNSAEAFKCMMCDVRKGT. A compositionally biased stretch (low complexity) spans 62-73; it reads QQVTQQFVPPTQ. Residues 74 to 93 are compositionally biased toward basic and acidic residues; the sequence is SKKEKKDKVEKEKSEKETTS. Residues 95–105 show a composition bias toward basic residues; sequence KNSHKKTRPRL. 2 stretches are compositionally biased toward low complexity: residues 136 to 156 and 163 to 174; these read SPPA…SSSD and SRSSSPRGEASS. The residue at position 167 (S167) is a Phosphoserine.

Interacts with MYC, MYCN, RNF2/RING1B and YY1. Part of the E2F6.com-1 complex in G0 phase composed of E2F6, MGA, MAX, TFDP1, CBX3, BAT8, EUHMTASE1, RING1, RNF2, MBLR, L3MBTL2 and YAF2.

It localises to the nucleus. Binds to MYC and inhibits MYC-mediated transactivation. Also binds to MYCN and enhances MYCN-dependent transcriptional activation. Increases calpain 2-mediated proteolysis of YY1 in vitro. Component of the E2F6.com-1 complex, a repressive complex that methylates 'Lys-9' of histone H3, suggesting that it is involved in chromatin-remodeling. This is YY1-associated factor 2 (YAF2) from Homo sapiens (Human).